Reading from the N-terminus, the 326-residue chain is Ribosomal large subunit pseudouridine synthase D (326 aa).

Positions 18–91 constitute an S4 RNA-binding domain; it reads QRLDQALAEM…IPLDIVYEDE (74 aa). Residue D139 is part of the active site.

The protein belongs to the pseudouridine synthase RluA family.

The protein localises to the cytoplasm. The enzyme catalyses uridine(1911/1915/1917) in 23S rRNA = pseudouridine(1911/1915/1917) in 23S rRNA. In terms of biological role, responsible for synthesis of pseudouridine from uracil at positions 1911, 1915 and 1917 in 23S ribosomal RNA. This is Ribosomal large subunit pseudouridine synthase D (rluD) from Shigella flexneri.